A 504-amino-acid polypeptide reads, in one-letter code: Zinc finger CCCH domain-containing protein 18 (504 aa).

Positions 40 to 69 (SNADLLEVHEELLAAIKDAEEGLLHLKRSR) form a coiled coil. A disordered region spans residues 77 to 105 (IFPNQEPTSEAPEVAVDPPDDVEPEPLEP). Residues 94-104 (PPDDVEPEPLE) show a composition bias toward acidic residues. The C3H1-type zinc-finger motif lies at 146-173 (SENMSMCKFFLQQRCRFGSNCRLSHGIV). A disordered region spans residues 230–276 (GSSARLPSDSLSISEYADESDEDGEGSSSDEGSDFSEDGDQEDESVH). 2 stretches are compositionally biased toward acidic residues: residues 245 to 254 (YADESDEDGE) and 260 to 272 (EGSDFSEDGDQED). The G-patch domain maps to 304–350 (TRGVASKMMAKMGYREGMGLGVSGQGMLDPIPVKVLPPKQSLDHAVA). Disordered regions lie at residues 351–390 (ASEVNDSVGPGKKRSRGGKRKREKKFAEQARAAKAEEEER), 406–432 (AEGSAVKSKKDSSGEANGHAKKEDRRS), and 482–504 (EATHASATNAVARKEKEKKWLKF). Residues 361–374 (GKKRSRGGKRKREK) show a composition bias toward basic residues. 3 stretches are compositionally biased toward basic and acidic residues: residues 375 to 390 (KFAEQARAAKAEEEER), 413 to 432 (SKKDSSGEANGHAKKEDRRS), and 493 to 504 (ARKEKEKKWLKF). The stretch at 430–500 (RRSLLAYDDE…AVARKEKEKK (71 aa)) forms a coiled coil.

The sequence is that of Zinc finger CCCH domain-containing protein 18 from Oryza sativa subsp. japonica (Rice).